Reading from the N-terminus, the 85-residue chain is Coiled-coil-helix-coiled-coil-helix domain-containing protein 7 (85 aa).

A CHCH domain is found at Ile13 to Met55. 2 short sequence motifs (cx9C motif) span residues Cys16–Cys26 and Cys37–Cys47. Intrachain disulfides connect Cys16–Cys47 and Cys26–Cys37.

This sequence belongs to the CHCHD7 family. Monomer.

The protein resides in the mitochondrion intermembrane space. The polypeptide is Coiled-coil-helix-coiled-coil-helix domain-containing protein 7 (CHCHD7) (Macaca fascicularis (Crab-eating macaque)).